The chain runs to 111 residues: Guanylate cyclase activator 2B (111 aa).

The N-terminal stretch at 1–26 (MGSRTLLGHLSVLAVVLLLLLQGTQS) is a signal peptide. Positions 27–96 (VDIKYQGYQV…SILQALRTMD (70 aa)) are excised as a propeptide. 3 disulfides stabilise this stretch: Cys-67–Cys-80, Cys-100–Cys-108, and Cys-103–Cys-111.

This sequence belongs to the guanylin family.

It is found in the secreted. Its function is as follows. Endogenous activator of intestinal guanylate cyclase. It stimulates this enzyme through the same receptor binding region as the heat-stable enterotoxins. May be a potent physiological regulator of intestinal fluid and electrolyte transport. May be an autocrine/paracrine regulator of intestinal salt and water transport. This Cavia porcellus (Guinea pig) protein is Guanylate cyclase activator 2B (GUCA2B).